The sequence spans 81 residues: Apolipoprotein C-I, acidic form (81 aa).

The signal sequence occupies residues 1 to 24 (MRLFLSLLVVVLSIVLEGPTPAQG).

This sequence belongs to the apolipoprotein C1 family.

The protein resides in the secreted. The protein is Apolipoprotein C-I, acidic form (APOC1A) of Cercocebus atys (Sooty mangabey).